A 173-amino-acid chain; its full sequence is Photosystem I assembly protein Ycf3 (173 aa).

TPR repeat units lie at residues 35–68, 72–105, and 120–153; these read AFAY…EDDP, SYIL…NPRM, and GEKA…APNN.

The protein belongs to the Ycf3 family.

The protein resides in the cellular thylakoid membrane. Its function is as follows. Essential for the assembly of the photosystem I (PSI) complex. May act as a chaperone-like factor to guide the assembly of the PSI subunits. The chain is Photosystem I assembly protein Ycf3 from Picosynechococcus sp. (strain ATCC 27264 / PCC 7002 / PR-6) (Agmenellum quadruplicatum).